Reading from the N-terminus, the 187-residue chain is MKNCMMADQRGRSILKHQPVVGDEVLEFSRGLAPSTFGFRYAAYMDRNHFLPSGRAAVKHIADPTLAYVMMRHRQCHDFLHVITGCGRSVEEELAVKVFEWKHTGLPLGLLSLLGGASRLSATQLAHMRLFWEWASHNAPCSRHDKPAVPMYLNVPWEDMLAKEYDEVAAYTGITPLPVFLKKHQKQ.

Residues His-77, Asp-78, His-81, and Glu-93 each contribute to the Zn(2+) site.

It belongs to the COQ4 family. In terms of assembly, component of a multi-subunit COQ enzyme complex. Zn(2+) serves as cofactor.

Its subcellular location is the mitochondrion inner membrane. The enzyme catalyses a 4-hydroxy-3-methoxy-5-(all-trans-polyprenyl)benzoate + H(+) = a 2-methoxy-6-(all-trans-polyprenyl)phenol + CO2. It functions in the pathway cofactor biosynthesis; ubiquinone biosynthesis. Its function is as follows. Lyase that catalyzes the C1-decarboxylation of 4-hydroxy-3-methoxy-5-(all-trans-polyprenyl)benzoic acid into 2-methoxy-6-(all-trans-polyprenyl)phenol during ubiquinone biosynthesis. The polypeptide is Ubiquinone biosynthesis protein COQ4 homolog, mitochondrial (Leishmania braziliensis).